Consider the following 236-residue polypeptide: Phosphoribosylformylglycinamidine synthase subunit PurQ (236 aa).

Residues 3-234 form the Glutamine amidotransferase type-1 domain; sequence FGVIVFPGSN…VDWWERGERL (232 aa). Residue C86 is the Nucleophile of the active site. Active-site residues include H203 and E205.

In terms of assembly, part of the FGAM synthase complex composed of 1 PurL, 1 PurQ and 2 PurS subunits.

The protein localises to the cytoplasm. It catalyses the reaction N(2)-formyl-N(1)-(5-phospho-beta-D-ribosyl)glycinamide + L-glutamine + ATP + H2O = 2-formamido-N(1)-(5-O-phospho-beta-D-ribosyl)acetamidine + L-glutamate + ADP + phosphate + H(+). The catalysed reaction is L-glutamine + H2O = L-glutamate + NH4(+). It participates in purine metabolism; IMP biosynthesis via de novo pathway; 5-amino-1-(5-phospho-D-ribosyl)imidazole from N(2)-formyl-N(1)-(5-phospho-D-ribosyl)glycinamide: step 1/2. Its function is as follows. Part of the phosphoribosylformylglycinamidine synthase complex involved in the purines biosynthetic pathway. Catalyzes the ATP-dependent conversion of formylglycinamide ribonucleotide (FGAR) and glutamine to yield formylglycinamidine ribonucleotide (FGAM) and glutamate. The FGAM synthase complex is composed of three subunits. PurQ produces an ammonia molecule by converting glutamine to glutamate. PurL transfers the ammonia molecule to FGAR to form FGAM in an ATP-dependent manner. PurS interacts with PurQ and PurL and is thought to assist in the transfer of the ammonia molecule from PurQ to PurL. This Moorella thermoacetica (strain ATCC 39073 / JCM 9320) protein is Phosphoribosylformylglycinamidine synthase subunit PurQ.